We begin with the raw amino-acid sequence, 355 residues long: Putative cyclin-A3-1 (355 aa).

This sequence belongs to the cyclin family. Cyclin AB subfamily.

This chain is Putative cyclin-A3-1 (CYCA3-1), found in Arabidopsis thaliana (Mouse-ear cress).